Reading from the N-terminus, the 287-residue chain is tRNA pseudouridine synthase B (287 aa).

The active-site Nucleophile is the aspartate 38.

This sequence belongs to the pseudouridine synthase TruB family. Type 1 subfamily.

The catalysed reaction is uridine(55) in tRNA = pseudouridine(55) in tRNA. Its function is as follows. Responsible for synthesis of pseudouridine from uracil-55 in the psi GC loop of transfer RNAs. In Mycoplasma mobile (strain ATCC 43663 / 163K / NCTC 11711) (Mesomycoplasma mobile), this protein is tRNA pseudouridine synthase B.